The primary structure comprises 189 residues: UPF0149 protein VF_2102 (189 aa).

The protein belongs to the UPF0149 family.

The chain is UPF0149 protein VF_2102 from Aliivibrio fischeri (strain ATCC 700601 / ES114) (Vibrio fischeri).